The following is a 263-amino-acid chain: Translation initiation factor 2 subunit alpha (263 aa).

Positions 12–83 (GEILIATVKQ…RKGTIDVSLK (72 aa)) constitute an S1 motif domain.

It belongs to the eIF-2-alpha family. Heterotrimer composed of an alpha, a beta and a gamma chain.

In terms of biological role, eIF-2 functions in the early steps of protein synthesis by forming a ternary complex with GTP and initiator tRNA. The polypeptide is Translation initiation factor 2 subunit alpha (Sulfurisphaera tokodaii (strain DSM 16993 / JCM 10545 / NBRC 100140 / 7) (Sulfolobus tokodaii)).